Consider the following 187-residue polypeptide: Large ribosomal subunit protein uL5 (187 aa).

The protein belongs to the universal ribosomal protein uL5 family. Part of the 50S ribosomal subunit; part of the 5S rRNA/L5/L18/L25 subcomplex. Contacts the 5S rRNA and the P site tRNA. Forms a bridge to the 30S subunit in the 70S ribosome.

In terms of biological role, this is one of the proteins that bind and probably mediate the attachment of the 5S RNA into the large ribosomal subunit, where it forms part of the central protuberance. In the 70S ribosome it contacts protein S13 of the 30S subunit (bridge B1b), connecting the 2 subunits; this bridge is implicated in subunit movement. Contacts the P site tRNA; the 5S rRNA and some of its associated proteins might help stabilize positioning of ribosome-bound tRNAs. This Brachyspira hyodysenteriae (strain ATCC 49526 / WA1) protein is Large ribosomal subunit protein uL5.